Reading from the N-terminus, the 108-residue chain is uncharacterized protein (108 aa).

An N-terminal signal peptide occupies residues 1–21 (MFRSLFLAAALMAFTPLAANA).

This sequence to E.coli YaaX.

This is an uncharacterized protein from Escherichia coli O157:H7.